Reading from the N-terminus, the 186-residue chain is Holliday junction branch migration complex subunit RuvA (186 aa).

The tract at residues 1–61 is domain I; the sequence is MYSYIKGKVV…ENLQILYGFN (61 aa). The domain II stretch occupies residues 62–134; sequence DNKNLLFFKK…LKGDLIFSEK (73 aa). The flexible linker stretch occupies residues 134-135; the sequence is KI. Residues 136–186 are domain III; it reads ILNPKKTELEKILLNLGFVKKEIKSVLNQIDDKKELELMLKEVLLKLAKNI.

This sequence belongs to the RuvA family. Homotetramer. Forms an RuvA(8)-RuvB(12)-Holliday junction (HJ) complex. HJ DNA is sandwiched between 2 RuvA tetramers; dsDNA enters through RuvA and exits via RuvB. An RuvB hexamer assembles on each DNA strand where it exits the tetramer. Each RuvB hexamer is contacted by two RuvA subunits (via domain III) on 2 adjacent RuvB subunits; this complex drives branch migration. In the full resolvosome a probable DNA-RuvA(4)-RuvB(12)-RuvC(2) complex forms which resolves the HJ.

The protein resides in the cytoplasm. Its function is as follows. The RuvA-RuvB-RuvC complex processes Holliday junction (HJ) DNA during genetic recombination and DNA repair, while the RuvA-RuvB complex plays an important role in the rescue of blocked DNA replication forks via replication fork reversal (RFR). RuvA specifically binds to HJ cruciform DNA, conferring on it an open structure. The RuvB hexamer acts as an ATP-dependent pump, pulling dsDNA into and through the RuvAB complex. HJ branch migration allows RuvC to scan DNA until it finds its consensus sequence, where it cleaves and resolves the cruciform DNA. This is Holliday junction branch migration complex subunit RuvA from Phytoplasma mali (strain AT).